The primary structure comprises 70 residues: Conotoxin Cal6.11 (70 aa).

Positions 1–22 (MKLTCVLIIAVLILTACQFIAA) are cleaved as a signal peptide. Positions 23–43 (DNTEYRKWRRSGTSTGMRLGS) are excised as a propeptide. 3 disulfides stabilise this stretch: C46/C57, C50/C62, and C56/C69. 4-hydroxyproline is present on residues P48 and P58. 2 positions are modified to 4-carboxyglutamate: E60 and E67.

It belongs to the conotoxin O1 superfamily. In terms of tissue distribution, expressed by the venom duct.

The protein resides in the secreted. In terms of biological role, probable neurotoxin with unknown target. Possibly targets ion channels. In Californiconus californicus (California cone), this protein is Conotoxin Cal6.11.